The primary structure comprises 185 residues: Elongation factor P (185 aa).

It belongs to the elongation factor P family.

Its subcellular location is the cytoplasm. It functions in the pathway protein biosynthesis; polypeptide chain elongation. In terms of biological role, involved in peptide bond synthesis. Stimulates efficient translation and peptide-bond synthesis on native or reconstituted 70S ribosomes in vitro. Probably functions indirectly by altering the affinity of the ribosome for aminoacyl-tRNA, thus increasing their reactivity as acceptors for peptidyl transferase. This Microcystis aeruginosa (strain NIES-843 / IAM M-2473) protein is Elongation factor P.